The primary structure comprises 432 residues: Adenylosuccinate synthetase (432 aa).

GTP-binding positions include 13 to 19 and 41 to 43; these read GDEGKGK and GHT. Catalysis depends on Asp14, which acts as the Proton acceptor. Asp14 and Gly41 together coordinate Mg(2+). Residues 14–17, 39–42, Thr130, Arg144, Gln225, Thr240, and Arg304 contribute to the IMP site; these read DEGK and NAGH. The Proton donor role is filled by His42. 300–306 contributes to the substrate binding site; that stretch reads ATTGRKR. Residues Arg306, 332 to 334, and 415 to 417 contribute to the GTP site; these read KLD and STG.

It belongs to the adenylosuccinate synthetase family. As to quaternary structure, homodimer. Mg(2+) serves as cofactor.

The protein resides in the cytoplasm. It catalyses the reaction IMP + L-aspartate + GTP = N(6)-(1,2-dicarboxyethyl)-AMP + GDP + phosphate + 2 H(+). The protein operates within purine metabolism; AMP biosynthesis via de novo pathway; AMP from IMP: step 1/2. Functionally, plays an important role in the de novo pathway of purine nucleotide biosynthesis. Catalyzes the first committed step in the biosynthesis of AMP from IMP. The polypeptide is Adenylosuccinate synthetase (Tolumonas auensis (strain DSM 9187 / NBRC 110442 / TA 4)).